A 500-amino-acid polypeptide reads, in one-letter code: Perfringolysin O (500 aa).

The signal sequence occupies residues 1–28 (MIRFKKTKLIASIAMALCLFSQPVISFS). The next 4 membrane-spanning stretches (beta stranded) occupy residues 189–202 (KSQI…NAKV), 209–218 (VDFNAVANNE), 287–296 (SKDVQAAFKA), and 304–316 (KNSQ…YENS). The Conserved undecapeptide motif lies at 458–468 (ECTGLAWEWWR). Positions 490–491 (TL) match the Cholesterol binding motif.

Belongs to the cholesterol-dependent cytolysin family. In terms of assembly, homooligomeric pore complex of 35 to 50 subunits; when inserted in the host membrane.

The protein resides in the secreted. The protein localises to the host cell membrane. In terms of biological role, a cholesterol-dependent toxin that causes cytolysis by forming pores in cholesterol containing host membranes. After binding to target membranes, the protein assembles into a pre-pore complex. A conformation change leads to insertion in the host membrane and formation of an oligomeric pore complex. Cholesterol is required for binding to host cell membranes, membrane insertion and pore formation; cholesterol binding is mediated by a Thr-Leu pair in the C-terminus. Can be reversibly inactivated by oxidation. This Clostridium perfringens (strain ATCC 13124 / DSM 756 / JCM 1290 / NCIMB 6125 / NCTC 8237 / Type A) protein is Perfringolysin O (pfo).